A 185-amino-acid polypeptide reads, in one-letter code: Large ribosomal subunit protein uL5 (185 aa).

Belongs to the universal ribosomal protein uL5 family. Part of the 50S ribosomal subunit; part of the 5S rRNA/L5/L18/L25 subcomplex. Contacts the 5S rRNA and the P site tRNA. Forms a bridge to the 30S subunit in the 70S ribosome.

Its function is as follows. This is one of the proteins that bind and probably mediate the attachment of the 5S RNA into the large ribosomal subunit, where it forms part of the central protuberance. In the 70S ribosome it contacts protein S13 of the 30S subunit (bridge B1b), connecting the 2 subunits; this bridge is implicated in subunit movement. Contacts the P site tRNA; the 5S rRNA and some of its associated proteins might help stabilize positioning of ribosome-bound tRNAs. The protein is Large ribosomal subunit protein uL5 of Rhodopseudomonas palustris (strain BisB5).